The sequence spans 883 residues: MSSTPKQTTGDALAGHTPMMQQYLRLKAEAGPLLLFYRMGDFYEMFYEDAERAARLLNLTLTKRGNSNGTPIPMAGIPVHAMEQYLARLVALGESVAICEQIGDPAAAKGPVERRIVRIVTPGTLTDEALLPAKADRALAAVCVTGKREPRAGLAWLNLASGAFHVTECAPGQLESELHRIAPAELIQAESAELHMAFEGARTRVPDWHFEADGARAQLLAHFKTDSLGGFDVEDMPAAVCAAGALLRYAARTQSQALAHVQTIAAERPGQYVLLDPVTRRNLELTQTLSGEESPTLFSLLDGCRTPMGSRLLRRWLHHPLRENEPVLARQHAIATMLTVRQEGEQAFAAAGLLETLRDALNAFPDIERIAARVALRSVRPRELASLRDALVALPALHASLAPLSGSPRARELAAQLAMPPDIGELLARAVASEPAVAIRDGGVIAAGFDSELDELRALATDGGDFLVQLEARERERTGIGNLRVEFNRVHGFYIEVSKGQTDKVPEDYRRRQTLKNAERYITPELKTWEDRVLSAQDRSLAREKWLYEQLLDALAQYVRPLSQCASALAELDTLAALAEHARRHDWVAPELIDGAEIDIEAGRHPVVERAIERFTPNGCRLDQTRRMLLITGPNMGGKSTYMRQVALIALLARTGSFVPATRARVGRLDRIFTRIGAADDLAGGRSTFMMEMTEAAAILAASTPASLVLMDEIGRGTSTYDGLALAWAIAYRLLTHNRALTLFATHYFELTRLPAEQPTAANVHLAAAESAGGIVFLHEVREGPASRSYGIQVAQRAGVPAAVIRQASRELERLEAQGAPTPQLGLFAAALDADVQSQAMTEQAEDAAALAQLRDQLAAIDPDSLTPREALDALYRLKQHLT.

633–640 (GPNMGGKS) lines the ATP pocket.

This sequence belongs to the DNA mismatch repair MutS family.

In terms of biological role, this protein is involved in the repair of mismatches in DNA. It is possible that it carries out the mismatch recognition step. This protein has a weak ATPase activity. The chain is DNA mismatch repair protein MutS from Bordetella parapertussis (strain 12822 / ATCC BAA-587 / NCTC 13253).